The primary structure comprises 156 residues: Persephin (156 aa).

Residues 1–21 form the signal peptide; sequence MAAGRLRILCLLLLSLHPSLG. 3 disulfide bridges follow: Cys66/Cys124, Cys93/Cys152, and Cys97/Cys154.

Belongs to the TGF-beta family. GDNF subfamily. In terms of assembly, homodimer; disulfide-linked. Interacts with GFRA4 coreceptor and RET: forms a 2:2:2 ternary complex composed of PSPN ligand, GFRA4 and RET receptor.

It is found in the secreted. In terms of biological role, growth factor that exhibits neurotrophic activity on mesencephalic dopaminergic and motor neurons. Acts by binding to its coreceptor, GFRA4, leading to autophosphorylation and activation of the RET receptor. This chain is Persephin, found in Mus musculus (Mouse).